Reading from the N-terminus, the 267-residue chain is Thiazole synthase (267 aa).

Lys101 serves as the catalytic Schiff-base intermediate with DXP. 1-deoxy-D-xylulose 5-phosphate contacts are provided by residues Gly162, 188 to 189 (AG), and 210 to 211 (NT). Residues 247-267 (HASPSSPAAGVPCLPDPEVPV) are disordered.

The protein belongs to the ThiG family. Homotetramer. Forms heterodimers with either ThiH or ThiS.

It localises to the cytoplasm. The catalysed reaction is [ThiS sulfur-carrier protein]-C-terminal-Gly-aminoethanethioate + 2-iminoacetate + 1-deoxy-D-xylulose 5-phosphate = [ThiS sulfur-carrier protein]-C-terminal Gly-Gly + 2-[(2R,5Z)-2-carboxy-4-methylthiazol-5(2H)-ylidene]ethyl phosphate + 2 H2O + H(+). The protein operates within cofactor biosynthesis; thiamine diphosphate biosynthesis. Its function is as follows. Catalyzes the rearrangement of 1-deoxy-D-xylulose 5-phosphate (DXP) to produce the thiazole phosphate moiety of thiamine. Sulfur is provided by the thiocarboxylate moiety of the carrier protein ThiS. In vitro, sulfur can be provided by H(2)S. This chain is Thiazole synthase, found in Deinococcus geothermalis (strain DSM 11300 / CIP 105573 / AG-3a).